A 311-amino-acid chain; its full sequence is Giardin subunit gamma (311 aa).

Residues 185–233 (GLQTEINSLEAIIEREFAQAANRLNQEVSNFKESFDASERNIKLQKKHV) are a coiled coil.

Interacts with EB1.

Its subcellular location is the cytoplasm. The protein resides in the cytoskeleton. Functionally, giardins are involved in parasite attachment to the intestinal mucosa and in the cytoskeletal disassembly and reassembly that marks the transition from infectious trophozoite to transmissible cyst. They may interact with other cytoskeletal proteins such as microtubules in the microribbons or crossbridges, to maintain the integrity of the ventral disk. Involved in formation of the ventral disk. The sequence is that of Giardin subunit gamma from Giardia intestinalis (Giardia lamblia).